The sequence spans 367 residues: Endophilin-A2 (367 aa).

Residues 1–21 form a membrane-binding amphipathic helix region; sequence MSVAGLKKQFYKASQLVSEKV. The BAR domain occupies 18 to 249; the sequence is SEKVGGAEGT…LKRRMREASS (232 aa). Residues 60–87 are required for dimerization upon membrane association; the sequence is PNPASRAKLTMLNTMSKIRGQVKNPGYP. The stretch at 181–250 forms a coiled coil; sequence EELRQAMEKF…KRRMREASSR (70 aa). The interaction with ARC stretch occupies residues 218 to 254; the sequence is LVDAQLDYHRQAVQILDELAEKLKRRMREASSRPRRE. The segment at 243–293 is disordered; sequence RMREASSRPRREYKPKPRETYDFGESDQSNGGFSCTPTPKVSASSSFRSDK. Residues 245-263 are compositionally biased toward basic and acidic residues; the sequence is REASSRPRREYKPKPRETY. Residues 268–289 are compositionally biased toward polar residues; sequence SDQSNGGFSCTPTPKVSASSSF. Positions 305 to 364 constitute an SH3 domain; sequence LDQPCCKALYDFEPENDGELGFKEGDIITLTNQIDENWYEGMINGQSGFFPLNYVEVLVP.

This sequence belongs to the endophilin family. As to quaternary structure, interacts with ARC. Interacts with SYNJ1 and DNM1. In terms of tissue distribution, highest level in central region of the theca of developing follicles (at protein level). Expressed at highest level in brain and testis, at high level in kidney, lung and stroma, low level in spleen and adrenal gland (at protein level). Expressed in most tissue with highest levels in small ovarian follicles, brain and testis.

It is found in the cytoplasm. It localises to the early endosome membrane. The protein localises to the cell projection. Its subcellular location is the podosome. Implicated in endocytosis. May recruit other proteins to membranes with high curvature. The protein is Endophilin-A2 of Gallus gallus (Chicken).